The following is a 526-amino-acid chain: Glutamate--tRNA ligase, mitochondrial (526 aa).

A mitochondrion-targeting transit peptide spans 1-38 (MLSYTSCAKLICSRYIVSKISFYSLKRCNSTAVVRTRF). 37–39 (RFA) contacts L-glutamate. A 'HIGH' region motif is present at residues 42 to 50 (PTGFLHLGS). Position 47 (H47) interacts with ATP. Residues E73, 222–226 (YHFAN), and R240 each bind L-glutamate. ATP contacts are provided by residues E243 and 278-282 (KLSKR). The short motif at 278–282 (KLSKR) is the 'KMSKS' region element.

The protein belongs to the class-I aminoacyl-tRNA synthetase family. Glutamate--tRNA ligase type 1 subfamily.

The protein resides in the mitochondrion. The enzyme catalyses tRNA(Glu) + L-glutamate + ATP = L-glutamyl-tRNA(Glu) + AMP + diphosphate. Functionally, catalyzes the attachment of glutamate to tRNA(Glu) in a two-step reaction: glutamate is first activated by ATP to form Glu-AMP and then transferred to the acceptor end of tRNA(Glu). The sequence is that of Glutamate--tRNA ligase, mitochondrial (mse1) from Schizosaccharomyces pombe (strain 972 / ATCC 24843) (Fission yeast).